The sequence spans 210 residues: Probable GTP-binding protein EngB (210 aa).

Residues 29-203 (NGIEIAFAGR…SNKLDSWFAP (175 aa)) form the EngB-type G domain. GTP-binding positions include 37-44 (GRSNAGKS), 64-68 (GRTQL), 82-85 (DLPG), 149-152 (TKAD), and 181-184 (IYSA). Mg(2+) contacts are provided by S44 and T66.

The protein belongs to the TRAFAC class TrmE-Era-EngA-EngB-Septin-like GTPase superfamily. EngB GTPase family. Mg(2+) is required as a cofactor.

Its function is as follows. Necessary for normal cell division and for the maintenance of normal septation. This chain is Probable GTP-binding protein EngB, found in Haemophilus ducreyi (strain 35000HP / ATCC 700724).